The sequence spans 518 residues: Bifunctional methyltransferase (518 aa).

Residues 1-300 (MQYSIKQILS…SHNRVIEISP (300 aa)) are hemK. The interval 1–302 (MQYSIKQILS…NRVIEISPIN (302 aa)) is RF MTase. S-adenosyl-L-methionine contacts are provided by residues 140–144 (GTGSG), aspartate 163, tryptophan 192, asparagine 207, glutamate 347, glutamate 372, asparagine 399, and aspartate 421. 207 to 210 (NPPY) contacts substrate. The tract at residues 301–518 (INLNRSYARR…MILQHALTDH (218 aa)) is tRNA (guanine-N(7)-)-methyltransferase. The interval 305 to 518 (RSYARRIGKS…MILQHALTDH (214 aa)) is tRNA MTase. Aspartate 421 is an active-site residue. Substrate-binding residues include lysine 425 and aspartate 457.

It in the C-terminal section; belongs to the class I-like SAM-binding methyltransferase superfamily. TrmB family. The protein in the N-terminal section; belongs to the protein N5-glutamine methyltransferase family. PrmC subfamily.

It catalyses the reaction L-glutaminyl-[peptide chain release factor] + S-adenosyl-L-methionine = N(5)-methyl-L-glutaminyl-[peptide chain release factor] + S-adenosyl-L-homocysteine + H(+). It carries out the reaction guanosine(46) in tRNA + S-adenosyl-L-methionine = N(7)-methylguanosine(46) in tRNA + S-adenosyl-L-homocysteine. In terms of biological role, methylates the class 1 translation termination release factors RF1/PrfA and RF2/PrfB on the glutamine residue of the universally conserved GGQ motif. Catalyzes the formation of N(7)-methylguanine at position 46 (m7G46) in tRNA. The polypeptide is Bifunctional methyltransferase (prmC/trmB) (Rickettsia prowazekii (strain Madrid E)).